Reading from the N-terminus, the 75-residue chain is Conotoxin Leo-O3 (75 aa).

The first 22 residues, methionine 1–alanine 22, serve as a signal peptide directing secretion. Residues aspartate 23 to arginine 42 constitute a propeptide that is removed on maturation. Cystine bridges form between cysteine 47–cysteine 60, cysteine 54–cysteine 63, and cysteine 59–cysteine 69. Cysteine amide is present on cysteine 69. The propeptide occupies glycine 70–valine 75.

Belongs to the conotoxin O1 superfamily. Expressed by the venom duct.

It is found in the secreted. This Conus leopardus (Leopard cone) protein is Conotoxin Leo-O3.